The primary structure comprises 230 residues: Voltage-gated hydrogen channel 1 (230 aa).

Residues methionine 1–lysine 58 are Cytoplasmic-facing. A helical transmembrane segment spans residues phenylalanine 59–leucine 79. Topologically, residues leucine 80–isoleucine 96 are extracellular. The helical transmembrane segment at phenylalanine 97 to phenylalanine 119 threads the bilayer. The Cytoplasmic segment spans residues arginine 120–lysine 127. The helical transmembrane segment at phenylalanine 128–serine 148 threads the bilayer. Residues arginine 149–alanine 155 lie on the Extracellular side of the membrane. A helical transmembrane segment spans residues valine 156 to valine 176. Over serine 177–serine 230 the chain is Cytoplasmic. A coiled-coil region spans residues valine 178–asparagine 225.

Belongs to the hydrogen channel family. In terms of assembly, homodimer.

Its subcellular location is the membrane. It is found in the cell membrane. Functionally, mediates the voltage-dependent proton permeability of excitable membranes. Forms a proton-selective channel through which protons may pass in accordance with their electrochemical gradient. The polypeptide is Voltage-gated hydrogen channel 1 (hvcn1) (Xenopus laevis (African clawed frog)).